A 139-amino-acid chain; its full sequence is Large ribosomal subunit protein uL16 (139 aa).

This sequence belongs to the universal ribosomal protein uL16 family. Part of the 50S ribosomal subunit.

Functionally, binds 23S rRNA and is also seen to make contacts with the A and possibly P site tRNAs. In Chlorobium luteolum (strain DSM 273 / BCRC 81028 / 2530) (Pelodictyon luteolum), this protein is Large ribosomal subunit protein uL16.